We begin with the raw amino-acid sequence, 236 residues long: 15,16-dihydrobiliverdin:ferredoxin oxidoreductase (236 aa).

This sequence belongs to the HY2 family.

It catalyses the reaction 15,16-dihydrobiliverdin + oxidized 2[4Fe-4S]-[ferredoxin] = biliverdin IXalpha + reduced 2[4Fe-4S]-[ferredoxin] + 2 H(+). In terms of biological role, catalyzes the two-electron reduction of biliverdin IX-alpha at the C15 methine bridge. This is 15,16-dihydrobiliverdin:ferredoxin oxidoreductase from Prochlorococcus marinus (strain MIT 9215).